A 226-amino-acid chain; its full sequence is Flagellar L-ring protein (226 aa).

The N-terminal stretch at 1-15 (MKRLAVSILCLALAG) is a signal peptide. Cysteine 16 carries the N-palmitoyl cysteine lipid modification. Cysteine 16 carries S-diacylglycerol cysteine lipidation.

The protein belongs to the FlgH family. In terms of assembly, the basal body constitutes a major portion of the flagellar organelle and consists of four rings (L,P,S, and M) mounted on a central rod.

The protein resides in the cell outer membrane. It is found in the bacterial flagellum basal body. Functionally, assembles around the rod to form the L-ring and probably protects the motor/basal body from shearing forces during rotation. This Geobacter metallireducens (strain ATCC 53774 / DSM 7210 / GS-15) protein is Flagellar L-ring protein.